The following is a 211-amino-acid chain: HTH-type transcriptional repressor FabR (211 aa).

One can recognise an HTH tetR-type domain in the interval 10-70 (RTRRSLVEAA…TMVDESGLML (61 aa)). Positions 33–52 (SLREVAREAGIAPTSFYRHF) form a DNA-binding region, H-T-H motif.

Homodimer.

It localises to the cytoplasm. Its function is as follows. Represses the transcription of fabB, involved in unsaturated fatty acid (UFA) biosynthesis. By controlling UFA production, FabR directly influences the physical properties of the membrane bilayer. This chain is HTH-type transcriptional repressor FabR, found in Cronobacter sakazakii (strain ATCC BAA-894) (Enterobacter sakazakii).